The primary structure comprises 349 residues: Aspartate carbamoyltransferase catalytic subunit (349 aa).

Positions 59 and 60 each coordinate carbamoyl phosphate. Lysine 87 contributes to the L-aspartate binding site. Positions 109, 142, and 145 each coordinate carbamoyl phosphate. L-aspartate-binding residues include arginine 182 and arginine 253. Positions 294 and 295 each coordinate carbamoyl phosphate.

This sequence belongs to the aspartate/ornithine carbamoyltransferase superfamily. ATCase family. Heterododecamer (2C3:3R2) of six catalytic PyrB chains organized as two trimers (C3), and six regulatory PyrI chains organized as three dimers (R2).

It catalyses the reaction carbamoyl phosphate + L-aspartate = N-carbamoyl-L-aspartate + phosphate + H(+). It participates in pyrimidine metabolism; UMP biosynthesis via de novo pathway; (S)-dihydroorotate from bicarbonate: step 2/3. In terms of biological role, catalyzes the condensation of carbamoyl phosphate and aspartate to form carbamoyl aspartate and inorganic phosphate, the committed step in the de novo pyrimidine nucleotide biosynthesis pathway. This chain is Aspartate carbamoyltransferase catalytic subunit, found in Synechococcus sp. (strain CC9605).